The chain runs to 519 residues: FAD-dependent monooxygenase macF (519 aa).

The N-terminal stretch at 1–20 (MTKMTSIIGILMGVLTTATA) is a signal peptide. Residues 88–262 (CRLNASCIVT…TEYDLTTNTG (175 aa)) enclose the FAD-binding PCMH-type domain. H125 carries the post-translational modification Pros-8alpha-FAD histidine.

This sequence belongs to the oxygen-dependent FAD-linked oxidoreductase family.

The protein operates within secondary metabolite biosynthesis; terpenoid biosynthesis. In terms of biological role, FAD-dependent monooxygenase; part of the gene cluster that mediates the biosynthesis of macrophorins, isoprenoid epoxycyclohexenones containing cyclized drimane moieties. The first step of the pathway is the synthesis of 6-methylsalicylic acid (6-MSA) by the polyketide synthase macA. 6-MSA is then converted to m-cresol by the decarboxylase macB. The cytochrome P450 monooxygenase macC then catalyzes the oxidation of m-cresol to toluquinol. Epoxidation of toluquinol is then performed by the short chain dehydrogenase macD, with the help of macE, and a further prenylation by macG leads to 7-deacetoxyyanuthone A. The next step is the hydroxylation of C-22 of 7-deacetoxyyanuthone A by the cytochrome P450 monooxygenase macH to yield 22-deacetylyanuthone A. O-Mevalon transferase macI then attaches mevalon to the hydroxyl group of 22-deacetylyanuthone A to produce yanuthone E. The terpene cyclase macJ catalyzes the cyclization of 22-deacetylyanuthone A to macrophorin A. MacJ is also able to catalyze cyclization of yanuthone E and 7-deacetoxyyanuthone A to their corresponding macrophorins. The macJ products can be further modified by macH and macJ, as well as by the FAD-dependent monooxygenase macF, to produce additional macrophorins, including 4'-oxomacrophorin A, 4'-oxomacrophorin D and 4'-oxomacrophorin E. The sequence is that of FAD-dependent monooxygenase macF from Penicillium terrestre.